The sequence spans 214 residues: uncharacterized protein (214 aa).

2 CBS domains span residues 7–65 (MDKN…KKPI) and 69–129 (MRPV…EIPV).

This is an uncharacterized protein from Methanocaldococcus jannaschii (strain ATCC 43067 / DSM 2661 / JAL-1 / JCM 10045 / NBRC 100440) (Methanococcus jannaschii).